A 584-amino-acid chain; its full sequence is Putative adenine deaminase BA_3032/GBAA_3032/BAS2818 (584 aa).

This sequence belongs to the metallo-dependent hydrolases superfamily. Adenine deaminase family.

It catalyses the reaction adenine + H2O + H(+) = hypoxanthine + NH4(+). This Bacillus anthracis protein is Putative adenine deaminase BA_3032/GBAA_3032/BAS2818.